Here is an 894-residue protein sequence, read N- to C-terminus: Nitrate reductase [NADPH] (894 aa).

The disordered stretch occupies residues 1–79; that stretch reads MAVKSQLGVT…PEDLKTPDHR (79 aa). A compositionally biased stretch (polar residues) spans 7 to 16; that stretch reads LGVTYTTKTF. Residues 69–79 are compositionally biased toward basic and acidic residues; sequence LPEDLKTPDHR. Residue Cys169 coordinates Mo-molybdopterin. The 76-residue stretch at 535-610 folds into the Cytochrome b5 heme-binding domain; sequence VRIISLEELK…MPQYHIGTLN (76 aa). 2 residues coordinate heme: His570 and His593. The FAD-binding FR-type domain occupies 638–749; it reads KYWSKAILET…KGPVGKFEYL (112 aa). FAD-binding positions include 692–695, 709–713, 723–725, Ser773, and Thr776; these read RAYT, LIKIY, and KMT.

Belongs to the nitrate reductase family. Homodimer. It depends on FAD as a cofactor. The cofactor is heme. Mo-molybdopterin is required as a cofactor.

It carries out the reaction nitrite + NADP(+) + H2O = nitrate + NADPH + H(+). Functionally, nitrate reductase is a key enzyme involved in the first step of nitrate assimilation in plants, fungi and bacteria. This Beauveria bassiana (White muscardine disease fungus) protein is Nitrate reductase [NADPH] (NIA).